A 452-amino-acid polypeptide reads, in one-letter code: MELSRRICLVRLWLLLLSFLLGFSAGSAIDWREPEGKEVWDYVTVRKDAHMFWWLYYATNPCKNFSELPLVMWLQGGPGGSSTGFGNFEEIGPLDTQLKPRNTTWLQWASLLFVDNPVGTGFSYVNTTDAYAKDLDTVASDMMVLLKSFFDCHKEFQTVPFYIFSESYGGKMAAGISVELYKAVQQGTIKCNFSGVALGDSWISPVDSVLSWGPYLYSMSLLDNQGLAEVSDIAEQVLDAVNKGFYKEATQLWGKAEMIIEKNTDGVNFYNILTKSSPEKAMESSLEFLRSPLVRLCQRHVRHLQGDALSQLMNGPIKKKLKIIPEDISWGAQASYVFLSMEGDFMKPAIDVVDKLLAAGVNVTVYNGQLDLIVDTIGQESWVQKLKWPQLSKFNQLKWKALYTDPKSSETAAFVKSYENLAFYWILKAGHMVPSDQGEMALKMMKLVTKQE.

The signal sequence occupies residues 1–28 (MELSRRICLVRLWLLLLSFLLGFSAGSA). 3 N-linked (GlcNAc...) asparagine glycosylation sites follow: N64, N102, and N126. S167 is a catalytic residue. N-linked (GlcNAc...) asparagine glycosylation is found at N192 and N362. Catalysis depends on residues D371 and H431.

The protein belongs to the peptidase S10 family.

The protein resides in the secreted. Functionally, may be involved in vascular wall and kidney homeostasis. This Mus musculus (Mouse) protein is Retinoid-inducible serine carboxypeptidase (Scpep1).